A 116-amino-acid polypeptide reads, in one-letter code: Large ribosomal subunit protein eL22B (116 aa).

It belongs to the eukaryotic ribosomal protein eL22 family.

This Dictyostelium discoideum (Social amoeba) protein is Large ribosomal subunit protein eL22B (rpl22a).